A 286-amino-acid chain; its full sequence is Ribosome-inactivating protein momordin II (286 aa).

The signal sequence occupies residues 1–23 (MVKCLLLSFLIIAIFIGVPTAKG). Glutamate 181 is a catalytic residue.

This sequence belongs to the ribosome-inactivating protein family. Type 1 RIP subfamily.

It catalyses the reaction Endohydrolysis of the N-glycosidic bond at one specific adenosine on the 28S rRNA.. The chain is Ribosome-inactivating protein momordin II from Momordica balsamina (Bitter gourd).